Reading from the N-terminus, the 267-residue chain is Myb-related protein Hv1 (267 aa).

2 HTH myb-type domains span residues 9–61 (KAHT…INYL) and 62–116 (RPDL…RRKL). 2 consecutive DNA-binding regions (H-T-H motif) follow at residues 37-61 (WRSL…INYL) and 89-112 (WSLI…NTHI).

In terms of tissue distribution, germinating seed and apical meristem of shoot and root.

The protein localises to the nucleus. Its function is as follows. Possible transcription activator in response to an external signal. May be involved in the regulation of flavonoid biosynthesis. In Hordeum vulgare (Barley), this protein is Myb-related protein Hv1 (MYB1).